Consider the following 402-residue polypeptide: Probable tRNA pseudouridine synthase D (402 aa).

Residue Asp94 is the Nucleophile of the active site. Residues 175–364 (YILNYYGTQR…PGTRRKLITK (190 aa)) form the TRUD domain.

This sequence belongs to the pseudouridine synthase TruD family.

It catalyses the reaction uridine(13) in tRNA = pseudouridine(13) in tRNA. Its function is as follows. Could be responsible for synthesis of pseudouridine from uracil-13 in transfer RNAs. This Methanococcus aeolicus (strain ATCC BAA-1280 / DSM 17508 / OCM 812 / Nankai-3) protein is Probable tRNA pseudouridine synthase D.